Reading from the N-terminus, the 714-residue chain is Forkhead box protein P2 (714 aa).

Residues 1–28 show a composition bias toward polar residues; sequence MMQESATETISNSSMNQNGMSTLSSQLD. Disordered stretches follow at residues 1-45 and 280-338; these read MMQE…SEVS and DNGI…TGAS. Residues 291 to 304 show a composition bias toward low complexity; that stretch reads TTNNSSSTTSSTTS. A compositionally biased stretch (polar residues) spans 314-323; the sequence is SIVNGQSSVL. Positions 325-336 are enriched in basic and acidic residues; that stretch reads ARRDSSSHEETG. The segment at 345–370 adopts a C2H2-type zinc-finger fold; sequence GVCKWPGCESICEDFGQFLKHLNNEH. The tract at residues 387-408 is leucine-zipper; the sequence is VQQLEIQLSKERERLQAMMTHL. Residues 421 to 425 form a CTBP1-binding region; sequence PLNLV. Positions 437–458 are enriched in low complexity; sequence TSPQSLPQTPTTPTAPVTPITQ. The disordered stretch occupies residues 437 to 464; the sequence is TSPQSLPQTPTTPTAPVTPITQGPSVIT. The fork-head DNA-binding region spans 503–593; it reads RPPFTYATLI…SQKITGSPTL (91 aa). Disordered stretches follow at residues 648–667 and 677–714; these read LDHIDSNGNSSPGCSPQPHI and VIAEDEDCPMSLVTTANHSPELEDDREIEEEPLSEDLE. The span at 698-714 shows a compositional bias: acidic residues; sequence LEDDREIEEEPLSEDLE.

In terms of assembly, forms homodimers and heterodimers with FOXP1 and FOXP4. Dimerization is required for DNA-binding. Interacts with CTBP1. Interacts with FOXP1. Interacts with TBR1. Interacts with ZMYM2. As to expression, highest expression in lung. Lower expression in spleen, skeletal muscle, brain, kidney and small intestine.

The protein resides in the nucleus. Transcriptional repressor that may play a role in the specification and differentiation of lung epithelium. May also play a role in developing neural, gastrointestinal and cardiovascular tissues. Can act with CTBP1 to synergistically repress transcription but CTPBP1 is not essential. Plays a role in synapse formation by regulating SRPX2 levels. The sequence is that of Forkhead box protein P2 (Foxp2) from Mus musculus (Mouse).